Here is a 616-residue protein sequence, read N- to C-terminus: Protein cereblon (616 aa).

Disordered stretches follow at residues 1-39, 63-137, and 182-220; these read MDEE…DDSV, FGPS…AMPR, and SQER…DIDM. The span at 11–32 shows a compositional bias: low complexity; the sequence is AQEQEVAGSAGEAAAGPSGAEV. The segment covering 96–107 has biased composition (acidic residues); sequence SEEDIVLDDGTE. Residues 183–192 show a composition bias toward basic and acidic residues; it reads QERRRSRNSD. Acidic residues predominate over residues 194 to 203; the sequence is VSPEAEDDEL. Positions 206-215 are enriched in pro residues; that stretch reads HPPPPPPRPP. Residues 257–482 enclose the Lon N-terminal domain; that stretch reads HMLIFLHQYI…LIGGILKEET (226 aa). The CULT domain maps to 481 to 590; sequence ETLFYCRYCN…LAGSSVRIGK (110 aa). Zn(2+) is bound by residues cysteine 486, cysteine 489, cysteine 555, and cysteine 558.

This sequence belongs to the CRBN family. Likely a component of a DCX (DDB1-CUL4-X-box) protein ligase complex. May interact with pic/DDB1. Ubiquitinated.

It localises to the nucleus. It participates in protein modification; protein ubiquitination. Substrate recognition component of a DCX (DDB1-CUL4-X-box) E3 protein ligase complex that mediates the ubiquitination and subsequent proteasomal degradation of target proteins. Has an essential role in mediating growth by negatively regulating insulin signaling. It also has a role in maintaining presynaptic function in the neuromuscular junction synapses of third-instar larvae. The polypeptide is Protein cereblon (Drosophila persimilis (Fruit fly)).